Reading from the N-terminus, the 343-residue chain is MSDSETEETKISTEPVENAWAMKIPSFKPEDNPHGMVEESSFATLFPKYRERYLKEVWPLVEQCVAEHHLKAELDLVEGSMVVKTSRKTWDPYIIIKARDMIKLMARSVPFEQAKRVLQDDIGCDIIKIGNLVHKKEKFVKRRQRLIGPNGATLKSIELLTDCYVLVQGNTVAALGPYKGLQQVRDIVVETMNNVHPIYNIKALMIKRELMKDPRLANEDWSRFLPKFKNKNISKRKQPKVKKAKKEYTPFPPAQPESKVGKQLASGEYFLNKEQKQAKRQQERSAKQADAAKRQDERRNKDFVPPTEEASSSRKRSSAENASSKVDVKALKAKLLKANKKKV.

Positions 125–193 constitute a KH domain; that stretch reads DIIKIGNLVH…VRDIVVETMN (69 aa). Residues 232-245 show a composition bias toward basic residues; that stretch reads NISKRKQPKVKKAK. Residues 232 to 343 are disordered; that stretch reads NISKRKQPKV…KLLKANKKKV (112 aa). The stretch at 270–302 forms a coiled coil; it reads FLNKEQKQAKRQQERSAKQADAAKRQDERRNKD. A compositionally biased stretch (basic and acidic residues) spans 271 to 302; sequence LNKEQKQAKRQQERSAKQADAAKRQDERRNKD. A compositionally biased stretch (basic residues) spans 331-343; sequence LKAKLLKANKKKV.

It belongs to the KRR1 family. Monomer. Component of the ribosomal small subunit (SSU) processome.

The protein resides in the nucleus. The protein localises to the nucleolus. Functionally, required for 40S ribosome biogenesis. Involved in nucleolar processing of pre-18S ribosomal RNA and ribosome assembly. Binds to RNA. Required for female germline development, cell viability during eye development and for survival of dividing cells and epithelial cells during early wing disk development. This chain is KRR1 small subunit processome component homolog, found in Drosophila ananassae (Fruit fly).